The following is a 163-amino-acid chain: Deoxyuridine 5'-triphosphate nucleotidohydrolase (163 aa).

This sequence belongs to the dUTPase family. Mg(2+) serves as cofactor.

It catalyses the reaction dUTP + H2O = dUMP + diphosphate + H(+). The protein operates within pyrimidine metabolism; dUMP biosynthesis; dUMP from dCTP (dUTP route): step 2/2. Its function is as follows. This enzyme is involved in nucleotide metabolism: it produces dUMP, the immediate precursor of thymidine nucleotides and it decreases the intracellular concentration of dUTP so that uracil cannot be incorporated into DNA. This Galliformes (FAdV-8) protein is Deoxyuridine 5'-triphosphate nucleotidohydrolase.